A 446-amino-acid chain; its full sequence is Alkylglycerol monooxygenase (446 aa).

Helical transmembrane passes span 39–59 and 103–123; these read VNQA…LGWL and FHFL…FLGV. Positions 117–248 constitute a Fatty acid hydroxylase domain; it reads WLAFLGVDMG…LIIWDRMFGT (132 aa). Residues 131-135 carry the Histidine box-1 motif; it reads HRFAH. The Histidine box-2 motif lies at 144-148; that stretch reads HQVHH. Residues 167 to 187 form a helical membrane-spanning segment; sequence FSSWIFYSPLALLIPPSVFAV. The Histidine box-3 motif lies at 220–224; sequence HRVHH. Helical transmembrane passes span 329-349, 362-382, and 410-430; these read AWSP…LDVY, LTVI…GFLI, and PLLP…TIYW.

Belongs to the sterol desaturase family. TMEM195 subfamily. Fe cation is required as a cofactor.

The protein resides in the endoplasmic reticulum membrane. It carries out the reaction 1-O-(1,2-saturated-alkyl)-sn-glycerol + (6R)-L-erythro-5,6,7,8-tetrahydrobiopterin + O2 = a 1-(1-hydroxyalkyl)-sn-glycerol + (6R)-L-erythro-6,7-dihydrobiopterin + H2O. In terms of biological role, glyceryl-ether monooxygenase that cleaves the O-alkyl bond of ether lipids. Ether lipids are essential components of brain membranes. This Danio rerio (Zebrafish) protein is Alkylglycerol monooxygenase (agmo).